Reading from the N-terminus, the 454-residue chain is Pyrrolysine--tRNA ligase (454 aa).

Positions 102–138 (TRTKKAMPKSVARAPKPLENTEAAQAQPSGSKFSPAI) are disordered. The span at 123 to 133 (EAAQAQPSGSK) shows a compositional bias: polar residues.

Belongs to the class-II aminoacyl-tRNA synthetase family.

It localises to the cytoplasm. It carries out the reaction tRNA(Pyl) + L-pyrrolysine + ATP = L-pyrrolysyl-tRNA(Pyl) + AMP + diphosphate. Its function is as follows. Catalyzes the attachment of pyrrolysine to tRNA(Pyl). Pyrrolysine is a lysine derivative encoded by the termination codon UAG. The protein is Pyrrolysine--tRNA ligase of Methanosarcina mazei (strain ATCC BAA-159 / DSM 3647 / Goe1 / Go1 / JCM 11833 / OCM 88) (Methanosarcina frisia).